The following is a 476-amino-acid chain: Aspartyl/glutamyl-tRNA(Asn/Gln) amidotransferase subunit B (476 aa).

It belongs to the GatB/GatE family. GatB subfamily. In terms of assembly, heterotrimer of A, B and C subunits.

It catalyses the reaction L-glutamyl-tRNA(Gln) + L-glutamine + ATP + H2O = L-glutaminyl-tRNA(Gln) + L-glutamate + ADP + phosphate + H(+). It carries out the reaction L-aspartyl-tRNA(Asn) + L-glutamine + ATP + H2O = L-asparaginyl-tRNA(Asn) + L-glutamate + ADP + phosphate + 2 H(+). Allows the formation of correctly charged Asn-tRNA(Asn) or Gln-tRNA(Gln) through the transamidation of misacylated Asp-tRNA(Asn) or Glu-tRNA(Gln) in organisms which lack either or both of asparaginyl-tRNA or glutaminyl-tRNA synthetases. The reaction takes place in the presence of glutamine and ATP through an activated phospho-Asp-tRNA(Asn) or phospho-Glu-tRNA(Gln). The protein is Aspartyl/glutamyl-tRNA(Asn/Gln) amidotransferase subunit B of Oleidesulfovibrio alaskensis (strain ATCC BAA-1058 / DSM 17464 / G20) (Desulfovibrio alaskensis).